Consider the following 275-residue polypeptide: Diaminopimelate epimerase (275 aa).

3 residues coordinate substrate: N12, Q45, and N65. C74 acts as the Proton donor in catalysis. Substrate-binding positions include 75 to 76 (GN), N158, N191, and 209 to 210 (ER). C218 serves as the catalytic Proton acceptor. 219-220 (GT) provides a ligand contact to substrate.

It belongs to the diaminopimelate epimerase family. As to quaternary structure, homodimer.

The protein localises to the cytoplasm. The enzyme catalyses (2S,6S)-2,6-diaminopimelate = meso-2,6-diaminopimelate. It participates in amino-acid biosynthesis; L-lysine biosynthesis via DAP pathway; DL-2,6-diaminopimelate from LL-2,6-diaminopimelate: step 1/1. Catalyzes the stereoinversion of LL-2,6-diaminopimelate (L,L-DAP) to meso-diaminopimelate (meso-DAP), a precursor of L-lysine and an essential component of the bacterial peptidoglycan. The protein is Diaminopimelate epimerase of Shewanella putrefaciens (strain CN-32 / ATCC BAA-453).